A 195-amino-acid chain; its full sequence is Imidazoleglycerol-phosphate dehydratase (195 aa).

Belongs to the imidazoleglycerol-phosphate dehydratase family.

The protein resides in the cytoplasm. The catalysed reaction is D-erythro-1-(imidazol-4-yl)glycerol 3-phosphate = 3-(imidazol-4-yl)-2-oxopropyl phosphate + H2O. It participates in amino-acid biosynthesis; L-histidine biosynthesis; L-histidine from 5-phospho-alpha-D-ribose 1-diphosphate: step 6/9. The polypeptide is Imidazoleglycerol-phosphate dehydratase (Exiguobacterium sp. (strain ATCC BAA-1283 / AT1b)).